Consider the following 490-residue polypeptide: Serine/threonine-protein kinase PBL35 (490 aa).

Disordered stretches follow at residues 1–39 (MGFD…RNSE) and 80–103 (SAIV…SNAE). A coiled-coil region spans residues 14-39 (SKTSNENEKKKKKRRRKKNNNVRNSE). The span at 23–33 (KKKKRRRKKNN) shows a compositional bias: basic residues. Low complexity predominate over residues 94–103 (SSTTTTSNAE). The region spanning 136-422 (FRPESLLGEG…VEVLKPLPHL (287 aa)) is the Protein kinase domain. Residues 142-150 (LGEGGFGCV) and K174 each bind ATP. At Y219 the chain carries Phosphotyrosine. D269 (proton acceptor) is an active-site residue. Phosphoserine is present on residues S273 and S303. Phosphothreonine occurs at positions 304 and 309. The residue at position 317 (Y317) is a Phosphotyrosine. Residues 442 to 490 (AGSGSGSGRGFGSRNGQPVFRTLSSPHGQAGSSPYRHQIPSPKPKGATT) form a disordered region. A compositionally biased stretch (gly residues) spans 444–454 (SGSGSGRGFGS). The span at 463 to 473 (TLSSPHGQAGS) shows a compositional bias: polar residues.

It belongs to the protein kinase superfamily. Ser/Thr protein kinase family. Interacts with SD129. In terms of processing, phosphorylated by SD129 in response to the pathogen-associated molecular pattern (PAMP) 3-OH-C10:0, a medium-chain 3-hydroxy fatty acid.

Its subcellular location is the cell membrane. The catalysed reaction is L-seryl-[protein] + ATP = O-phospho-L-seryl-[protein] + ADP + H(+). It catalyses the reaction L-threonyl-[protein] + ATP = O-phospho-L-threonyl-[protein] + ADP + H(+). Its function is as follows. Involved in chitin-triggered immune signaling and is required for reactive oxygen species (ROS) production. Acts downstream of SD129 in defense signaling triggered by the pathogen-associated molecular pattern (PAMP) 3-OH-C10:0, a medium-chain 3-hydroxy fatty acid. This chain is Serine/threonine-protein kinase PBL35, found in Arabidopsis thaliana (Mouse-ear cress).